We begin with the raw amino-acid sequence, 237 residues long: Demethylmenaquinone methyltransferase (237 aa).

S-adenosyl-L-methionine contacts are provided by residues T58, D79, and 106 to 107; that span reads NA.

Belongs to the class I-like SAM-binding methyltransferase superfamily. MenG/UbiE family.

The catalysed reaction is a 2-demethylmenaquinol + S-adenosyl-L-methionine = a menaquinol + S-adenosyl-L-homocysteine + H(+). Its pathway is quinol/quinone metabolism; menaquinone biosynthesis; menaquinol from 1,4-dihydroxy-2-naphthoate: step 2/2. Methyltransferase required for the conversion of demethylmenaquinol (DMKH2) to menaquinol (MKH2). This chain is Demethylmenaquinone methyltransferase, found in Anoxybacillus flavithermus (strain DSM 21510 / WK1).